A 243-amino-acid polypeptide reads, in one-letter code: Carboxy-S-adenosyl-L-methionine synthase (243 aa).

Residues Tyr40, 65-67 (GCS), 90-91 (DN), 118-119 (DI), Asn133, and Arg200 each bind S-adenosyl-L-methionine.

The protein belongs to the class I-like SAM-binding methyltransferase superfamily. Cx-SAM synthase family. In terms of assembly, homodimer.

It catalyses the reaction prephenate + S-adenosyl-L-methionine = carboxy-S-adenosyl-L-methionine + 3-phenylpyruvate + H2O. In terms of biological role, catalyzes the conversion of S-adenosyl-L-methionine (SAM) to carboxy-S-adenosyl-L-methionine (Cx-SAM). The polypeptide is Carboxy-S-adenosyl-L-methionine synthase (Shewanella loihica (strain ATCC BAA-1088 / PV-4)).